The primary structure comprises 589 residues: Acyl-CoA ligase SID4 (589 aa).

The PTS2-type peroxisomal targeting signal motif lies at 12–20 (RLQQTLNHI). ATP is bound by residues 228-236 (TSGSTGNPK), 367-372 (SSYGLT), Asp458, and Arg473. Residue Thr372 coordinates substrate. CoA is bound by residues 481 to 483 (GGE), Lys547, and 555 to 557 (FGL). ATP is bound at residue Lys572.

It belongs to the ATP-dependent AMP-binding enzyme family.

It is found in the peroxisome. Its pathway is siderophore biosynthesis. Functionally, acyl-CoA ligase; part of the gene cluster that mediates the biosynthesis of hydroxamate-containing siderophores that play a critical role in virulence via intracellular iron acquisition during macrophage infection. In Ajellomyces capsulatus (Darling's disease fungus), this protein is Acyl-CoA ligase SID4.